The primary structure comprises 289 residues: NAD(P)H-hydrate epimerase (289 aa).

The 207-residue stretch at 71–277 folds into the YjeF N-terminal domain; sequence AQTIDNELMS…SIVEKYNLKI (207 aa). 122–126 contributes to the (6S)-NADPHX binding site; sequence NNGGD. Asparagine 123 and aspartate 185 together coordinate K(+). Residues 189-195 and aspartate 218 each bind (6S)-NADPHX; that span reads GFSFRGE. Serine 221 is a binding site for K(+).

It belongs to the NnrE/AIBP family. It depends on K(+) as a cofactor.

It catalyses the reaction (6R)-NADHX = (6S)-NADHX. It carries out the reaction (6R)-NADPHX = (6S)-NADPHX. In terms of biological role, catalyzes the epimerization of the S- and R-forms of NAD(P)HX, a damaged form of NAD(P)H that is a result of enzymatic or heat-dependent hydration. This is a prerequisite for the S-specific NAD(P)H-hydrate dehydratase to allow the repair of both epimers of NAD(P)HX. The protein is NAD(P)H-hydrate epimerase of Plasmodium knowlesi (strain H).